The following is a 346-amino-acid chain: 4-hydroxy-3-methylbut-2-enyl diphosphate reductase (346 aa).

Residue Cys-19 participates in [4Fe-4S] cluster binding. Positions 48 and 84 each coordinate (2E)-4-hydroxy-3-methylbut-2-enyl diphosphate. Dimethylallyl diphosphate-binding residues include His-48 and His-84. Isopentenyl diphosphate-binding residues include His-48 and His-84. Cys-106 serves as a coordination point for [4Fe-4S] cluster. A (2E)-4-hydroxy-3-methylbut-2-enyl diphosphate-binding site is contributed by His-134. His-134 is a binding site for dimethylallyl diphosphate. His-134 contributes to the isopentenyl diphosphate binding site. Glu-136 (proton donor) is an active-site residue. A (2E)-4-hydroxy-3-methylbut-2-enyl diphosphate-binding site is contributed by Thr-175. Position 205 (Cys-205) interacts with [4Fe-4S] cluster. (2E)-4-hydroxy-3-methylbut-2-enyl diphosphate contacts are provided by Ser-233, Ser-234, Asn-235, and Ser-278. Ser-233, Ser-234, Asn-235, and Ser-278 together coordinate dimethylallyl diphosphate. 4 residues coordinate isopentenyl diphosphate: Ser-233, Ser-234, Asn-235, and Ser-278.

Belongs to the IspH family. It depends on [4Fe-4S] cluster as a cofactor.

It carries out the reaction isopentenyl diphosphate + 2 oxidized [2Fe-2S]-[ferredoxin] + H2O = (2E)-4-hydroxy-3-methylbut-2-enyl diphosphate + 2 reduced [2Fe-2S]-[ferredoxin] + 2 H(+). The enzyme catalyses dimethylallyl diphosphate + 2 oxidized [2Fe-2S]-[ferredoxin] + H2O = (2E)-4-hydroxy-3-methylbut-2-enyl diphosphate + 2 reduced [2Fe-2S]-[ferredoxin] + 2 H(+). The protein operates within isoprenoid biosynthesis; dimethylallyl diphosphate biosynthesis; dimethylallyl diphosphate from (2E)-4-hydroxy-3-methylbutenyl diphosphate: step 1/1. It participates in isoprenoid biosynthesis; isopentenyl diphosphate biosynthesis via DXP pathway; isopentenyl diphosphate from 1-deoxy-D-xylulose 5-phosphate: step 6/6. Catalyzes the conversion of 1-hydroxy-2-methyl-2-(E)-butenyl 4-diphosphate (HMBPP) into a mixture of isopentenyl diphosphate (IPP) and dimethylallyl diphosphate (DMAPP). Acts in the terminal step of the DOXP/MEP pathway for isoprenoid precursor biosynthesis. The polypeptide is 4-hydroxy-3-methylbut-2-enyl diphosphate reductase (Brucella suis biovar 1 (strain 1330)).